We begin with the raw amino-acid sequence, 658 residues long: Glycogen debranching enzyme (658 aa).

The active-site Nucleophile is Asp-336. The Proton donor role is filled by Glu-371. Residues 459–483 form a disordered region; it reads EANGEENRDGTNSNYSDNHGKEGLG.

The protein belongs to the glycosyl hydrolase 13 family.

It catalyses the reaction Hydrolysis of (1-&gt;6)-alpha-D-glucosidic linkages to branches with degrees of polymerization of three or four glucose residues in limit dextrin.. Its pathway is glycan degradation; glycogen degradation. Its function is as follows. Removes maltotriose and maltotetraose chains that are attached by 1,6-alpha-linkage to the limit dextrin main chain, generating a debranched limit dextrin. This chain is Glycogen debranching enzyme, found in Salmonella agona (strain SL483).